The primary structure comprises 191 residues: Protein DMP10 (191 aa).

4 consecutive transmembrane segments (helical) span residues 15–35 (FANL…PSFS), 48–68 (LLTI…SFTD), 114–134 (LSFV…ALAV), and 158–178 (LMIK…FAIF).

Belongs to the plant DMP1 protein family. Restricted to flowers.

The protein localises to the membrane. Involved in membrane remodeling. This Arabidopsis thaliana (Mouse-ear cress) protein is Protein DMP10.